Reading from the N-terminus, the 116-residue chain is Large ribosomal subunit protein bL17 (116 aa).

This sequence belongs to the bacterial ribosomal protein bL17 family. Part of the 50S ribosomal subunit. Contacts protein L32.

This chain is Large ribosomal subunit protein bL17, found in Synechococcus sp. (strain JA-3-3Ab) (Cyanobacteria bacterium Yellowstone A-Prime).